The chain runs to 186 residues: Elongation factor P (186 aa).

It belongs to the elongation factor P family.

The protein localises to the cytoplasm. It participates in protein biosynthesis; polypeptide chain elongation. Its function is as follows. Involved in peptide bond synthesis. Stimulates efficient translation and peptide-bond synthesis on native or reconstituted 70S ribosomes in vitro. Probably functions indirectly by altering the affinity of the ribosome for aminoacyl-tRNA, thus increasing their reactivity as acceptors for peptidyl transferase. This is Elongation factor P from Streptococcus sanguinis (strain SK36).